The following is a 510-amino-acid chain: NAD(P)H-quinone oxidoreductase subunit 2, chloroplastic (510 aa).

Transmembrane regions (helical) follow at residues 24–44, 59–79, 99–119, 124–144, 149–169, 184–204, 229–249, 295–315, 323–343, 354–374, 395–415, and 418–438; these read LLLFHGSFIFPECILIFGLIL, WFYFISSTSLVMSITALFFRW, IFQFLILLCSTLCIPLSVEYI, MAITEFLLFVLTATLGGMFLC, LITIFVAPECFSLCSYLLSGY, LLMGGASSSILVHGLSWLYGL, ISIALISITVGIGFKLSPAPF, WHLLLEILAILSMILGNLIAL, MLAYSSIGQIGYVIIGIIVGD, YMLFYISMNLGTFACIVSFGL, ALSSALCLLSLGGLPPLAGFF, and LYLFWCGWQAGLYFLVSIGLL.

Belongs to the complex I subunit 2 family. As to quaternary structure, NDH is composed of at least 16 different subunits, 5 of which are encoded in the nucleus.

The protein localises to the plastid. It localises to the chloroplast thylakoid membrane. It carries out the reaction a plastoquinone + NADH + (n+1) H(+)(in) = a plastoquinol + NAD(+) + n H(+)(out). The enzyme catalyses a plastoquinone + NADPH + (n+1) H(+)(in) = a plastoquinol + NADP(+) + n H(+)(out). NDH shuttles electrons from NAD(P)H:plastoquinone, via FMN and iron-sulfur (Fe-S) centers, to quinones in the photosynthetic chain and possibly in a chloroplast respiratory chain. The immediate electron acceptor for the enzyme in this species is believed to be plastoquinone. Couples the redox reaction to proton translocation, and thus conserves the redox energy in a proton gradient. This chain is NAD(P)H-quinone oxidoreductase subunit 2, chloroplastic, found in Coelogyne cristata (Orchid).